The following is a 255-amino-acid chain: Probable esterase ATEG_07663 (255 aa).

Catalysis depends on charge relay system residues serine 122, aspartate 200, and histidine 227.

It belongs to the LovG family.

Its function is as follows. Probable esterase; part of the cluster B that mediates the biosynthesis of azasperpyranones, members of the azaphilone family that exhibit anti-cancer activities. Azasperpyranones are synthesized by 2 clusters, A and B. Cluster A is responsible for the production of the polyhydric phenol moiety while the azaphilonoid scaffold is produced by the cluster B. The non-reducing polyketide synthase ATEG_03629 produces 5-methyl orsellinic acid, which is then reduced to 5-methyl orsellinic aldehyde by the NRPS-like protein ATEG_03630. 5-methyl orsellinic aldehyde is then first hydroxylated by the FAD-dependent monooxygenase ATEG_03635 and subsequently hydroxylated by the cytochrome P450 monooxygenase ATEG_03631 to produce the unstable polyhydric phenol precursor of azasperpyranones. On the other hand, the polyketide synthase ATEG_07659 is responsible for producing the 3,5-dimethyloctadienone moiety from acetyl-CoA, three malonyl-CoA, and two S-adenosyl methionines (SAM). The 3,5-dimethyloctadienone moiety is then loaded onto the SAT domain of ATEG_07661 and extended with four malonyl-CoA and one SAM, which leads to the formation of 2,4-dihydroxy-6-(5,7-dimethyl-2-oxo-trans-3-trans-5-nonadienyl)-3-methylbenzaldehyde (compound 8) after reductive release and aldol condensation. The FAD-dependent monooxygenase ATEG_07662 is the next enzyme in the biosynthesis sequence and hydroxylates the side chain at the benzylic position of compound 8. In Aspergillus nidulans, afoF, the ortholog of the FAD-dependent oxygenase ATEG_07660, is the key enzyme for the biosynthesis of asperfuranone by catalyzing the hydroxylation at C-8 of to prevent the formation of a six-membered ring hemiacetal intermediate and thus facilitating the formation of a five-membered ring to produce asperfuranone. In Aspergillus terreus, ATEG_07660 is probably not functional, which leads to the formation of the six-membered ring hemiacetal intermediate presperpyranone instead of asperfuranone. Finally, ATEG_03636 is involved in the condensation of the polyhydric phenol moiety produced by cluster A and the perasperpyranone precursor produced by cluster B, to yield azasperpyranone A. Further modifications of azasperpyranone A result in the production of derivatives, including azasperpyranone B to F. This chain is Probable esterase ATEG_07663, found in Aspergillus terreus (strain NIH 2624 / FGSC A1156).